A 386-amino-acid chain; its full sequence is Lycopene beta-cyclase (386 aa).

3–33 (DLILVGGGLANGLIAWRLRQRYPQLNLLLIE) contacts NAD(+).

This sequence belongs to the lycopene cyclase family. The cofactor is FAD.

The enzyme catalyses a carotenoid psi-end group = a carotenoid beta-end derivative. It carries out the reaction all-trans-lycopene = gamma-carotene. It catalyses the reaction gamma-carotene = all-trans-beta-carotene. The protein operates within carotenoid biosynthesis; beta-carotene biosynthesis. Its function is as follows. Catalyzes the double cyclization reaction which converts lycopene to beta-carotene. The protein is Lycopene beta-cyclase of Pseudescherichia vulneris (Escherichia vulneris).